Reading from the N-terminus, the 508-residue chain is Photosystem II CP47 reaction center protein (508 aa).

6 helical membrane-spanning segments follow: residues 21–36, 101–115, 140–156, 203–218, 237–252, and 457–472; these read SVHIMHTALVSGWAGS, IVFSGLCFLAAIWHW, GIHLFLAGVACFGFGAF, IAAGTLGILAGLFHLS, VLSSSIAAVFFAAFVV, and TFALLFFFGHIWHGAR.

Belongs to the PsbB/PsbC family. PsbB subfamily. As to quaternary structure, PSII is composed of 1 copy each of membrane proteins PsbA, PsbB, PsbC, PsbD, PsbE, PsbF, PsbH, PsbI, PsbJ, PsbK, PsbL, PsbM, PsbT, PsbX, PsbY, PsbZ, Psb30/Ycf12, at least 3 peripheral proteins of the oxygen-evolving complex and a large number of cofactors. It forms dimeric complexes. Requires Binds multiple chlorophylls. PSII binds additional chlorophylls, carotenoids and specific lipids. as cofactor.

The protein localises to the plastid. It is found in the chloroplast thylakoid membrane. One of the components of the core complex of photosystem II (PSII). It binds chlorophyll and helps catalyze the primary light-induced photochemical processes of PSII. PSII is a light-driven water:plastoquinone oxidoreductase, using light energy to abstract electrons from H(2)O, generating O(2) and a proton gradient subsequently used for ATP formation. The chain is Photosystem II CP47 reaction center protein from Oryza nivara (Indian wild rice).